Reading from the N-terminus, the 137-residue chain is Small ribosomal subunit protein bS16 (137 aa).

A compositionally biased stretch (basic and acidic residues) spans 104–118 (ADEKKKPVLKPKTEK). Positions 104-137 (ADEKKKPVLKPKTEKAAPAPEAAAPEAESTEEQA) are disordered. Low complexity predominate over residues 119 to 130 (AAPAPEAAAPEA).

Belongs to the bacterial ribosomal protein bS16 family.

In Clavibacter michiganensis subsp. michiganensis (strain NCPPB 382), this protein is Small ribosomal subunit protein bS16.